The following is a 144-amino-acid chain: Peptide methionine sulfoxide reductase MsrB (144 aa).

The 124-residue stretch at 5–128 (QEELRQRIGH…NSAALDFIPY (124 aa)) folds into the MsrB domain. C117 serves as the catalytic Nucleophile.

This sequence belongs to the MsrB Met sulfoxide reductase family.

The catalysed reaction is L-methionyl-[protein] + [thioredoxin]-disulfide + H2O = L-methionyl-(R)-S-oxide-[protein] + [thioredoxin]-dithiol. The protein is Peptide methionine sulfoxide reductase MsrB of Streptococcus agalactiae serotype Ia (strain ATCC 27591 / A909 / CDC SS700).